The following is a 148-amino-acid chain: UPF0178 protein CA_C2825 (148 aa).

Belongs to the UPF0178 family.

This Clostridium acetobutylicum (strain ATCC 824 / DSM 792 / JCM 1419 / IAM 19013 / LMG 5710 / NBRC 13948 / NRRL B-527 / VKM B-1787 / 2291 / W) protein is UPF0178 protein CA_C2825.